Consider the following 180-residue polypeptide: Putative manganese efflux pump MntP (180 aa).

Helical transmembrane passes span 6–26 (VLLLAGALGTDAFSLCLGLGL), 33–53 (MAWMLVGLIVALHVVLPVAGW), 63–83 (VGRWAAYLGAAILFYLGVKMV), 101–121 (GFLGLTVLAGSVSMDALSVGF), and 130–150 (LLLTAGVIGLVAGLMSAAAFV).

This sequence belongs to the MntP (TC 9.B.29) family.

The protein localises to the cell membrane. Its function is as follows. Probably functions as a manganese efflux pump. In Desulforudis audaxviator (strain MP104C), this protein is Putative manganese efflux pump MntP.